The primary structure comprises 349 residues: uncharacterized protein (349 aa).

This is an uncharacterized protein from Ostreid herpesvirus 1 (isolate France) (OsHV-1).